The sequence spans 149 residues: Transcriptional repressor NrdR (149 aa).

Residues 3–34 (CPFCFAVDTKVIDSRLVGGGSSVRRRRQCLVC) fold into a zinc finger. In terms of domain architecture, ATP-cone spans 49-139 (PRVVKSNDVR…VYRSFEDIKE (91 aa)).

Belongs to the NrdR family. The cofactor is Zn(2+).

Its function is as follows. Negatively regulates transcription of bacterial ribonucleotide reductase nrd genes and operons by binding to NrdR-boxes. The chain is Transcriptional repressor NrdR from Shigella boydii serotype 18 (strain CDC 3083-94 / BS512).